A 216-amino-acid chain; its full sequence is NADH-quinone oxidoreductase subunit C (216 aa).

This sequence belongs to the complex I 30 kDa subunit family. In terms of assembly, NDH-1 is composed of 14 different subunits. Subunits NuoB, C, D, E, F, and G constitute the peripheral sector of the complex.

It localises to the cell inner membrane. It catalyses the reaction a quinone + NADH + 5 H(+)(in) = a quinol + NAD(+) + 4 H(+)(out). In terms of biological role, NDH-1 shuttles electrons from NADH, via FMN and iron-sulfur (Fe-S) centers, to quinones in the respiratory chain. The immediate electron acceptor for the enzyme in this species is believed to be ubiquinone. Couples the redox reaction to proton translocation (for every two electrons transferred, four hydrogen ions are translocated across the cytoplasmic membrane), and thus conserves the redox energy in a proton gradient. The chain is NADH-quinone oxidoreductase subunit C from Francisella tularensis subsp. holarctica (strain OSU18).